The following is a 342-amino-acid chain: Prenyl transferase penC (342 aa).

A helical transmembrane segment spans residues 17-37 (LSYLTLTVGALALVVVLYISI). Residue His-110 participates in isopentenyl diphosphate binding. The Mg(2+) site is built by Asp-117 and Asp-121. Residue Arg-126 participates in dimethylallyl diphosphate binding. The N-linked (GlcNAc...) asparagine glycan is linked to Asn-154. Lys-210 serves as a coordination point for dimethylallyl diphosphate.

The protein belongs to the FPP/GGPP synthase family.

It localises to the membrane. It functions in the pathway secondary metabolite biosynthesis. Functionally, prenyl transferase; part of the gene cluster that mediates the biosynthesis of the indole diterpenes penitrems. The geranylgeranyl diphosphate (GGPP) synthase penG catalyzes the first step in penitrem biosynthesis via conversion of farnesyl pyrophosphate and isopentyl pyrophosphate into geranylgeranyl pyrophosphate (GGPP). Condensation of indole-3-glycerol phosphate with GGPP by the prenyl transferase penC then forms 3-geranylgeranylindole (3-GGI). Epoxidation by the FAD-dependent monooxygenase penM leads to a epoxidized-GGI that is substrate of the terpene cyclase penB for cyclization to yield paspaline. Paspaline is subsequently converted to 13-desoxypaxilline by the cytochrome P450 monooxygenase penP, the latter being then converted to paxilline by the cytochrome P450 monooxygenase penQ. Paxilline is converted to beta-paxitriol via C-10 ketoreduction by the short-chain dehydrogenase PC-15 which can be monoprenylated at the C-20 by the indole diterpene prenyltransferase penD. A two-step elimination (acetylation and elimination) process performed by the O-acetyltransferase PC-16 and the P.simplicissimum ptmI-ortholog not yet identified in P.crustosum, leads to the production of the prenylated form of penijanthine. The FAD-linked oxidoreductase ptmO then converts the prenylated form of penijanthine into PC-M5 which is in turn transformed into PC-M4 by the aromatic dimethylallyltransferase PC-22. A series of oxidation steps involving 4 cytochrome P450 monooxygenases (PC-21, PC-05, PC-23, PC-20) and a FAD-dependent monooxygenase (PC-14) are required for the transformation of PC-M4 to penitrems A and E. Synthesis of these final products is proposed to proceed via penitrems D and C (PC-21, PC-05, PC-14) and penitrems B and F (PC-21, PC-05, PC-14, PC-23). The chain is Prenyl transferase penC from Penicillium crustosum (Blue mold fungus).